The chain runs to 264 residues: Proteasome subunit alpha type-4 (264 aa).

It belongs to the peptidase T1A family. The 26S proteasome consists of a 20S proteasome core and two 19S regulatory subunits. The 20S proteasome core is composed of 28 subunits that are arranged in four stacked rings, resulting in a barrel-shaped structure. The two end rings are each formed by seven alpha subunits, and the two central rings are each formed by seven beta subunits. The catalytic chamber with the active sites is on the inside of the barrel. Interacts with PI31.

The protein resides in the cytoplasm. It is found in the nucleus. The proteasome is a multicatalytic proteinase complex which is characterized by its ability to cleave peptides with Arg, Phe, Tyr, Leu, and Glu adjacent to the leaving group at neutral or slightly basic pH. The proteasome has an ATP-dependent proteolytic activity. The chain is Proteasome subunit alpha type-4 (Prosalpha3) from Drosophila melanogaster (Fruit fly).